Here is a 463-residue protein sequence, read N- to C-terminus: MFS-type transporter criB (463 aa).

11 helical membrane passes run 5–27 (LVLS…SGIM), 46–66 (MVGT…LTAG), 83–103 (VFVV…MLLI), 106–126 (LVTG…QAEI), 141–161 (LMLA…SFVN), 168–188 (MPLA…YFLP), 256–276 (LFLG…VINY), 293–313 (IFLS…ALFF), 323–343 (LMMA…LTAA), 355–375 (VAMI…LSWV), and 402–422 (FYFL…FLYP).

It belongs to the major facilitator superfamily. Sugar transporter (TC 2.A.1.1) family.

Its subcellular location is the membrane. MFS-type transporter; part of the gene cluster that mediates the biosynthesis of echinulin family alkaloid. This chain is MFS-type transporter criB, found in Aspergillus cristatus (Chinese Fuzhuan brick tea-fermentation fungus).